Consider the following 407-residue polypeptide: MEPSISFVWGRWTVTVSNGLFSISNHEEIAPPATPFARLVHLPFSIESIIDQRISHGLVPTLLQLQQYTNSVPAVFSDYREQQACKPYVLPMFVSDFINPLIVFVKGGPIILRKNELKFHIVFISPIPRADISSFIFPPEDDTSKSLTLAGFGTKTENEINICGTTMKTEAGSYVMLFRCEKIPPFYNITSFDAKDSGLILETLLIQEVGADTYVMTVHLCGSPKPAHIEVQVHLTVLNSPTELVFKHALPWELAPSGGSVLPIYLEADKIIKPGNSVEICFSFVFNRGLVSSDQPALFVASSNHTTKYVVKPQIWYPITPLSITVYNPSNRIIFIKRGFCVAVAVPCFFHLKAPGQDCEERVILDRENSSIHWSDVLIKPGAGGPIVHVHHVALKEINLTEEPMNF.

This is an uncharacterized protein from Saimiriine herpesvirus 2 (strain 11) (SaHV-2).